The sequence spans 463 residues: Dopaminechrome tautomerase (463 aa).

The protein belongs to the major royal jelly protein family.

It localises to the secreted. It catalyses the reaction dopaminechrome = 5,6-dihydroxyindole. It functions in the pathway pigment biosynthesis; melanin biosynthesis. Catalyzes the conversion of dopaminechrome to 5,6-dihydroxyindole in the eumelanin biosynthetic pathway originating from dopamine. Catalyzes tautomerization of dopaminechrome to 5,6-dihydroxyindole during eumelanin biosynthesis. Acts both dopaminechrome and N-methyl dopaminechrome but not on dopachrome or other aminochromes tested. The polypeptide is Dopaminechrome tautomerase (Drosophila melanogaster (Fruit fly)).